Consider the following 177-residue polypeptide: Large ribosomal subunit protein uL6 (177 aa).

The protein belongs to the universal ribosomal protein uL6 family. As to quaternary structure, part of the 50S ribosomal subunit.

Its function is as follows. This protein binds to the 23S rRNA, and is important in its secondary structure. It is located near the subunit interface in the base of the L7/L12 stalk, and near the tRNA binding site of the peptidyltransferase center. The protein is Large ribosomal subunit protein uL6 of Leptothrix cholodnii (strain ATCC 51168 / LMG 8142 / SP-6) (Leptothrix discophora (strain SP-6)).